A 613-amino-acid chain; its full sequence is Ribosome-associated molecular chaperone SSB1 (613 aa).

Residues 1 to 391 (MAEGVFQGAI…ILTGQSTSED (391 aa)) are nucleotide binding domain (NBD). ATP is bound by residues 16–18 (TTY), K73, 205–207 (GGT), 271–278 (ERAKRTLS), and G342. Residues 392–402 (TKDLLLLDVAP) form an inter-domain linker region. The tract at residues 403 to 613 (LSLGVGMQGD…RVVTKAMSSR (211 aa)) is substrate binding domain (SBD). The lid domain (SBDalpha) stretch occupies residues 516-612 (SDEIEKMVNQ…KRVVTKAMSS (97 aa)). The Nuclear export signal signature appears at 574 to 582 (IESALSDAL).

Belongs to the heat shock protein 70 family. Ssb-type Hsp70 subfamily. Binds to ribosomes. Binds close to the ribosomal tunnel exit via contacts with both ribosomal proteins and rRNA. Directly interacts with nascent polypeptides. This interaction is dependent on the ribosome-associated complex (RAC). Interacts with SSE1. Interacts with FES1.

It is found in the cytoplasm. It catalyses the reaction ATP + H2O = ADP + phosphate + H(+). Ribosome-bound, Hsp70-type chaperone that assists in the cotranslational folding of newly synthesized proteins in the cytosol. Stimulates folding by interacting with nascent chains, binding to short, largely hydrophobic sequences exposed by unfolded proteins, thereby stabilizing longer, more slowly translated, and aggregation-prone nascent polypeptides and domains that cannot fold stably until fully synthesized. The Hsp70-protein substrate interaction depends on ATP-binding and on allosteric regulation between the NBD and the SBD. The ATP-bound state is characterized by a fast exchange rate of substrate (low affinity state), while in the ADP-bound state exchange is much slower (high affinity state). During the Hsp70 cycle, the chaperone switches between the ATP-bound state (open conformation) and the ADP-bound state (closed conformation) by major conformational rearrangements involving mainly the lid domain. Ssb cooperates with a specific Hsp40/Hsp70 co-chaperone termed the ribosome-associated complex (RAC), which stimulates the ATPase activity of the ribosome-associated pool of Ssbs and switches it to the high affinity substrate binding state. Hsp110 chaperone SSE1 and FES1 act as nucleotide exchange factors that cause substrate release. The sequence is that of Ribosome-associated molecular chaperone SSB1 (SSB1) from Zygosaccharomyces rouxii (strain ATCC 2623 / CBS 732 / NBRC 1130 / NCYC 568 / NRRL Y-229).